Consider the following 402-residue polypeptide: Enoyl-[acyl-carrier-protein] reductase [NADH] (402 aa).

NAD(+) contacts are provided by residues 48–53, 75–76, 112–113, and 141–142; these read GASSGF, FE, DV, and IA. Tyr231 provides a ligand contact to substrate. Tyr241 serves as the catalytic Proton donor. NAD(+) is bound by residues Lys250 and 279–281; that span reads LVT.

Belongs to the TER reductase family. As to quaternary structure, monomer.

It catalyses the reaction a 2,3-saturated acyl-[ACP] + NAD(+) = a (2E)-enoyl-[ACP] + NADH + H(+). Its pathway is lipid metabolism; fatty acid biosynthesis. In terms of biological role, involved in the final reduction of the elongation cycle of fatty acid synthesis (FAS II). Catalyzes the reduction of a carbon-carbon double bond in an enoyl moiety that is covalently linked to an acyl carrier protein (ACP). The polypeptide is Enoyl-[acyl-carrier-protein] reductase [NADH] (Vibrio cholerae serotype O1 (strain ATCC 39541 / Classical Ogawa 395 / O395)).